The following is a 254-amino-acid chain: MDGGGAHRTPEDVFRDFRARRAGMIKALTTDVEKFYQQCDPEKENLCLYGLPNETWEVNLPAEEVPPELPEPALGINFARDGMDEKDWLSLVAVHSDTWLLAVAFYFGARFGFDKESRKRLFSMINNLPTIYEVVTGTAKKQSKEKTPKTSGKSNKSGTKPSRQPEPNSRGPKMPPPKDEDDSGGEEEEEEEDHENTLCGACGDNYGQDEFWICCDACETWFHGKCVKITPAKAEHIKHYKCPNCSSSSKRARA.

The segment at 137 to 194 (GTAKKQSKEKTPKTSGKSNKSGTKPSRQPEPNSRGPKMPPPKDEDDSGGEEEEEEEDH) is disordered. The span at 149-162 (KTSGKSNKSGTKPS) shows a compositional bias: low complexity. Over residues 179 to 194 (DEDDSGGEEEEEEEDH) the composition is skewed to acidic residues. The PHD-type zinc-finger motif lies at 196–248 (NTLCGACGDNYGQDEFWICCDACETWFHGKCVKITPAKAEHIKHYKCPNCSSS).

Belongs to the Alfin family. In terms of assembly, interacts with H3K4me3 and to a lesser extent with H3K4me2.

The protein resides in the nucleus. In terms of biological role, histone-binding component that specifically recognizes H3 tails trimethylated on 'Lys-4' (H3K4me3), which mark transcription start sites of virtually all active genes. The chain is PHD finger protein ALFIN-LIKE 8 from Oryza sativa subsp. japonica (Rice).